The following is a 1282-amino-acid chain: MVQENNNTQSKWTDSQRQVIDENYHHILVSAGAGAGKTAVLVQRIISKLIDPHDDLTVNGLLVVTFTEKAANEMRDRIARELKKALSQDPENDHLKKQLYLLNKANISTLHSFCLEILRHYFYYLDIDPAFSVASEYDVELLRQSVIDNYLEEEYGLGEQSFYLLVDSYGGDKNDEKLKKMILTLHRFSRSHPRPRKWLQSVKDHFEVSTDDDLTNTVYYLEIQKDIETLFKQCINYFKRALQTSEQPGGPYQYAETLLEEIEQVQNFTQQLVEVENHSFDWNSFAERVAGFKFSKLPSVSKNDDVDEDLKKDCKKLRDHGKKTFQKLVQNYFTRSKDELLRDLQQLSPLMNKLIDMVINMDDKYEEVKKQRGIMDFSDLEHYVYELLDQYPEIVSELHQRYDEVMVDEYQDINQVQNAILEKLTGQQSISPDLFMVGDVKQSIYRFRLAEPELFLNKYDTFDQRSEEGSLIELQENFRSSPMVLESVNYLFSRIMTGSLSGIEYNEKVKLIPASKPRELYLNEDDNEDDKYEGQAENENQVIDGRTEVHLLENKDTNSREEDTEREAQLIATTINSLVEEEYRIYDRDLDDYRKLDYSDFVILSRKTKEQAELVTNVFQEHGVPLYAELDTGYFAAQEVQVMLSLLKIIDNPRQDIPLAGVLRSPLVGLDSNELVEIRRSNPGTDYYEACKRVLTNSIEQQNQCSEKTIQKMQKFFSQLERWRRISRERSLAELIWDIYQITDYLDYVAGFPGGRERQANLWSFYDRALQFDSFSHSGLVKFLNFIEKLVEQDFDLGKARTVSENENVVRLMSIHKSKGLEFPVVFVMGLGNNFNFNDQKGDLLLHKDLGLGPKLVDLTNRIKYPTIAHQAIKGSLGRETLAEEMRILYVAMTRAEEKLFLVGSGKDIESKISVPEEPAAAQNYLDWIYPQLGEDSELFHKIWNDIPGQQDGKSVEYNWKSYFESLLSQTFTWEVDQEEFEDQKRTLEQAISYSYPYNIATEIVGKMSVTDLAKSDTYIDSKIVSQNQSLSSVQDHYKKLAATQIPMFLETTEDAGDNKYESYKEHHTPSKRPEFLKSNSGLTGAEAGTSIHLAFQHLPINSDLNSQEFSEEQISNQLDDLVNKEIITQAQRDVISEDLIMKFFQSELGQAILERPKGLKRELPFTLGVPAWEMLAGSEECQAELEAENIETTELQGLSDETVVIQGVIDYLFWDGTNYYLIDFKTDKLNTSNMDEIEKRLQGKYRMQIQMYLRAITEIFNITPTKAYLYHVPTGNWIQVE.

A UvrD-like helicase ATP-binding domain is found at 10–481 (SKWTDSQRQV…IELQENFRSS (472 aa)). 31-38 (AGAGAGKT) is a binding site for ATP. The 305-residue stretch at 516-820 (KPRELYLNED…RLMSIHKSKG (305 aa)) folds into the UvrD-like helicase C-terminal domain.

Belongs to the helicase family. AddA subfamily. As to quaternary structure, heterodimer of AddA and AddB/RexB. The cofactor is Mg(2+).

It carries out the reaction Couples ATP hydrolysis with the unwinding of duplex DNA by translocating in the 3'-5' direction.. It catalyses the reaction ATP + H2O = ADP + phosphate + H(+). In terms of biological role, the heterodimer acts as both an ATP-dependent DNA helicase and an ATP-dependent, dual-direction single-stranded exonuclease. Recognizes the chi site generating a DNA molecule suitable for the initiation of homologous recombination. The AddA nuclease domain is required for chi fragment generation; this subunit has the helicase and 3' -&gt; 5' nuclease activities. The protein is ATP-dependent helicase/nuclease subunit A of Natranaerobius thermophilus (strain ATCC BAA-1301 / DSM 18059 / JW/NM-WN-LF).